Here is a 795-residue protein sequence, read N- to C-terminus: Phenylalanine--tRNA ligase beta subunit (795 aa).

Residues 39-148 enclose the tRNA-binding domain; that stretch reads AGTFNGVVVG…LDAPIGTDLR (110 aa). A B5 domain is found at 401–476; the sequence is PKVNTVQLRR…RIYGYNSIPN (76 aa). Positions 454, 460, 463, and 464 each coordinate Mg(2+). The 94-residue stretch at 701–794 folds into the FDX-ACB domain; sequence SKFPANRRDL…VKQRFNAELR (94 aa).

Belongs to the phenylalanyl-tRNA synthetase beta subunit family. Type 1 subfamily. Tetramer of two alpha and two beta subunits. It depends on Mg(2+) as a cofactor.

It localises to the cytoplasm. It carries out the reaction tRNA(Phe) + L-phenylalanine + ATP = L-phenylalanyl-tRNA(Phe) + AMP + diphosphate + H(+). This chain is Phenylalanine--tRNA ligase beta subunit (pheT), found in Haemophilus influenzae (strain ATCC 51907 / DSM 11121 / KW20 / Rd).